Here is a 373-residue protein sequence, read N- to C-terminus: 3-isopropylmalate dehydrogenase (373 aa).

An NAD(+)-binding site is contributed by 82 to 93 (GPKWGTGALRPE). 4 residues coordinate substrate: arginine 100, arginine 110, arginine 139, and aspartate 231. Mg(2+) is bound by residues aspartate 231, aspartate 256, and aspartate 260. 295-306 (GSAPDLPANKVN) contributes to the NAD(+) binding site.

The protein belongs to the isocitrate and isopropylmalate dehydrogenases family. Homodimer. It depends on Mg(2+) as a cofactor. Mn(2+) is required as a cofactor.

The protein resides in the cytoplasm. It carries out the reaction (2R,3S)-3-isopropylmalate + NAD(+) = 4-methyl-2-oxopentanoate + CO2 + NADH. Its pathway is amino-acid biosynthesis; L-leucine biosynthesis; L-leucine from 3-methyl-2-oxobutanoate: step 3/4. Its function is as follows. Catalyzes the oxidation of 3-carboxy-2-hydroxy-4-methylpentanoate (3-isopropylmalate) to 3-carboxy-4-methyl-2-oxopentanoate. The product decarboxylates to 4-methyl-2 oxopentanoate. This is 3-isopropylmalate dehydrogenase (LEU2) from Candida maltosa (Yeast).